The chain runs to 616 residues: Dihydroxy-acid dehydratase (616 aa).

Asp-81 is a binding site for Mg(2+). Position 122 (Cys-122) interacts with [2Fe-2S] cluster. Residues Asp-123 and Lys-124 each contribute to the Mg(2+) site. Lys-124 carries the N6-carboxylysine modification. Cys-195 lines the [2Fe-2S] cluster pocket. Glu-491 is a binding site for Mg(2+). Catalysis depends on Ser-517, which acts as the Proton acceptor.

The protein belongs to the IlvD/Edd family. As to quaternary structure, homodimer. [2Fe-2S] cluster serves as cofactor. Mg(2+) is required as a cofactor.

It carries out the reaction (2R)-2,3-dihydroxy-3-methylbutanoate = 3-methyl-2-oxobutanoate + H2O. It catalyses the reaction (2R,3R)-2,3-dihydroxy-3-methylpentanoate = (S)-3-methyl-2-oxopentanoate + H2O. The protein operates within amino-acid biosynthesis; L-isoleucine biosynthesis; L-isoleucine from 2-oxobutanoate: step 3/4. Its pathway is amino-acid biosynthesis; L-valine biosynthesis; L-valine from pyruvate: step 3/4. Its function is as follows. Functions in the biosynthesis of branched-chain amino acids. Catalyzes the dehydration of (2R,3R)-2,3-dihydroxy-3-methylpentanoate (2,3-dihydroxy-3-methylvalerate) into 2-oxo-3-methylpentanoate (2-oxo-3-methylvalerate) and of (2R)-2,3-dihydroxy-3-methylbutanoate (2,3-dihydroxyisovalerate) into 2-oxo-3-methylbutanoate (2-oxoisovalerate), the penultimate precursor to L-isoleucine and L-valine, respectively. This Escherichia coli O8 (strain IAI1) protein is Dihydroxy-acid dehydratase.